A 75-amino-acid polypeptide reads, in one-letter code: uncharacterized protein (75 aa).

This is an uncharacterized protein from Dryophytes versicolor (chameleon treefrog).